Consider the following 111-residue polypeptide: UPF0060 membrane protein XAC3064 (111 aa).

4 consecutive transmembrane segments (helical) span residues 8–28 (LLLF…PYLW), 32–52 (GGSV…VWLL), 64–84 (AAYG…VDGV), and 91–111 (LLGA…PRSA).

It belongs to the UPF0060 family.

The protein localises to the cell inner membrane. This chain is UPF0060 membrane protein XAC3064, found in Xanthomonas axonopodis pv. citri (strain 306).